Reading from the N-terminus, the 451-residue chain is UPF0210 protein CLL_A1718 (451 aa).

The protein belongs to the UPF0210 family. As to quaternary structure, homodimer.

In Clostridium botulinum (strain Eklund 17B / Type B), this protein is UPF0210 protein CLL_A1718.